A 102-amino-acid chain; its full sequence is Large ribosomal subunit protein bL21 (102 aa).

It belongs to the bacterial ribosomal protein bL21 family. In terms of assembly, part of the 50S ribosomal subunit. Contacts protein L20.

Functionally, this protein binds to 23S rRNA in the presence of protein L20. This is Large ribosomal subunit protein bL21 from Trichlorobacter lovleyi (strain ATCC BAA-1151 / DSM 17278 / SZ) (Geobacter lovleyi).